Consider the following 168-residue polypeptide: Protein-export protein SecB (168 aa).

The disordered stretch occupies residues 1–21 (MADQPSGNNDAKQAETNGNTV).

Belongs to the SecB family. In terms of assembly, homotetramer, a dimer of dimers. One homotetramer interacts with 1 SecA dimer.

Its subcellular location is the cytoplasm. Its function is as follows. One of the proteins required for the normal export of preproteins out of the cell cytoplasm. It is a molecular chaperone that binds to a subset of precursor proteins, maintaining them in a translocation-competent state. It also specifically binds to its receptor SecA. This is Protein-export protein SecB from Chelativorans sp. (strain BNC1).